The sequence spans 160 residues: Transcription elongation factor GreA (160 aa).

The protein belongs to the GreA/GreB family.

Functionally, necessary for efficient RNA polymerase transcription elongation past template-encoded arresting sites. The arresting sites in DNA have the property of trapping a certain fraction of elongating RNA polymerases that pass through, resulting in locked ternary complexes. Cleavage of the nascent transcript by cleavage factors such as GreA or GreB allows the resumption of elongation from the new 3'terminus. GreA releases sequences of 2 to 3 nucleotides. This chain is Transcription elongation factor GreA, found in Francisella philomiragia subsp. philomiragia (strain ATCC 25017 / CCUG 19701 / FSC 153 / O#319-036).